An 806-amino-acid polypeptide reads, in one-letter code: Phenylalanine--tRNA ligase beta subunit (806 aa).

Residues 44 to 158 (ADGLSKLVVG…EEAVPGDAIF (115 aa)) form the tRNA-binding domain. The B5 domain occupies 411 to 486 (TEPVEVSTSL…RIYGYDKLPT (76 aa)). Residues Asp464, Asp470, Glu473, and Glu474 each coordinate Mg(2+). The 94-residue stretch at 713 to 806 (TKFPAMTRDV…LTEQVGAEVR (94 aa)) folds into the FDX-ACB domain.

It belongs to the phenylalanyl-tRNA synthetase beta subunit family. Type 1 subfamily. In terms of assembly, tetramer of two alpha and two beta subunits. Mg(2+) serves as cofactor.

It localises to the cytoplasm. The enzyme catalyses tRNA(Phe) + L-phenylalanine + ATP = L-phenylalanyl-tRNA(Phe) + AMP + diphosphate + H(+). This Streptococcus pyogenes serotype M28 (strain MGAS6180) protein is Phenylalanine--tRNA ligase beta subunit.